The primary structure comprises 457 residues: Serine--tRNA ligase (457 aa).

252–254 (TAE) lines the L-serine pocket. ATP is bound by residues 283-285 (RKE) and Val299. Glu306 contacts L-serine. 370–373 (EMVS) is a binding site for ATP. Residue Thr406 coordinates L-serine.

This sequence belongs to the class-II aminoacyl-tRNA synthetase family. Type-1 seryl-tRNA synthetase subfamily. In terms of assembly, homodimer. The tRNA molecule binds across the dimer.

The protein localises to the cytoplasm. It catalyses the reaction tRNA(Ser) + L-serine + ATP = L-seryl-tRNA(Ser) + AMP + diphosphate + H(+). The enzyme catalyses tRNA(Sec) + L-serine + ATP = L-seryl-tRNA(Sec) + AMP + diphosphate + H(+). It functions in the pathway aminoacyl-tRNA biosynthesis; selenocysteinyl-tRNA(Sec) biosynthesis; L-seryl-tRNA(Sec) from L-serine and tRNA(Sec): step 1/1. Catalyzes the attachment of serine to tRNA(Ser). Is also able to aminoacylate tRNA(Sec) with serine, to form the misacylated tRNA L-seryl-tRNA(Sec), which will be further converted into selenocysteinyl-tRNA(Sec). In Saccharolobus solfataricus (strain ATCC 35092 / DSM 1617 / JCM 11322 / P2) (Sulfolobus solfataricus), this protein is Serine--tRNA ligase.